A 640-amino-acid polypeptide reads, in one-letter code: Chaperone protein HtpG (640 aa).

The interval 1 to 352 is a; substrate-binding; the sequence is MTEQTATQNY…SADLPLNVSR (352 aa). The segment at 353-571 is b; that stretch reads ELLQESRDVK…DGELSPQLIR (219 aa). Residues 572–640 are c; that stretch reads MLKQAGQAVP…VKRINSLLLK (69 aa).

This sequence belongs to the heat shock protein 90 family. As to quaternary structure, homodimer.

The protein localises to the cytoplasm. Functionally, molecular chaperone. Has ATPase activity. In Acinetobacter baylyi (strain ATCC 33305 / BD413 / ADP1), this protein is Chaperone protein HtpG.